The primary structure comprises 350 residues: Histidinol-phosphate aminotransferase 1 (350 aa).

An N6-(pyridoxal phosphate)lysine modification is found at Lys-209.

The protein belongs to the class-II pyridoxal-phosphate-dependent aminotransferase family. Histidinol-phosphate aminotransferase subfamily. In terms of assembly, homodimer. The cofactor is pyridoxal 5'-phosphate.

The enzyme catalyses L-histidinol phosphate + 2-oxoglutarate = 3-(imidazol-4-yl)-2-oxopropyl phosphate + L-glutamate. Its pathway is amino-acid biosynthesis; L-histidine biosynthesis; L-histidine from 5-phospho-alpha-D-ribose 1-diphosphate: step 7/9. This Bradyrhizobium diazoefficiens (strain JCM 10833 / BCRC 13528 / IAM 13628 / NBRC 14792 / USDA 110) protein is Histidinol-phosphate aminotransferase 1 (hisC1).